The following is a 979-amino-acid chain: UPF0182 protein MRA_0066 (979 aa).

7 consecutive transmembrane segments (helical) span residues 19–39 (LVTA…LVDI), 63–83 (LAIV…ALLL), 114–134 (LFGW…ASFD), 174–194 (WLFV…YLFG), 211–231 (VQLA…YWLD), 260–280 (KLVL…AIFL), and 288–308 (MAAA…PLLM). Residues 898–948 (GTGRVATARGGDAASAPPPGAGGPAPPQAVPPPRTTQPPAAPPRGPDVPPA) form a disordered region. A compositionally biased stretch (pro residues) spans 913–946 (APPPGAGGPAPPQAVPPPRTTQPPAAPPRGPDVP).

It belongs to the UPF0182 family.

It localises to the cell membrane. This is UPF0182 protein MRA_0066 from Mycobacterium tuberculosis (strain ATCC 25177 / H37Ra).